The following is a 381-amino-acid chain: Cobalt-precorrin-5B C(1)-methyltransferase (381 aa).

It belongs to the CbiD family.

The enzyme catalyses Co-precorrin-5B + S-adenosyl-L-methionine = Co-precorrin-6A + S-adenosyl-L-homocysteine. Its pathway is cofactor biosynthesis; adenosylcobalamin biosynthesis; cob(II)yrinate a,c-diamide from sirohydrochlorin (anaerobic route): step 6/10. Its function is as follows. Catalyzes the methylation of C-1 in cobalt-precorrin-5B to form cobalt-precorrin-6A. The sequence is that of Cobalt-precorrin-5B C(1)-methyltransferase from Prochlorococcus marinus (strain NATL1A).